The following is a 780-amino-acid chain: Subtilisin-like protease SBT5.1 (780 aa).

Positions 1–25 (MMRCLTITIMFFMFFFLSVIQKCKS) are cleaved as a signal peptide. Residues 26-106 (ETSKSGDYII…VFPDQMLQLH (81 aa)) constitute a propeptide, activation peptide. In terms of domain architecture, Inhibitor I9 spans 33–106 (YIIYMGAASS…VFPDQMLQLH (74 aa)). One can recognise a Peptidase S8 domain in the interval 110 to 617 (SWDFLVQESY…AGQVTIFGPS (508 aa)). D147 functions as the Charge relay system in the catalytic mechanism. N-linked (GlcNAc...) asparagine glycosylation occurs at N197. H215 acts as the Charge relay system in catalysis. Residue N230 is glycosylated (N-linked (GlcNAc...) asparagine). The PA domain maps to 385–469 (IDANEEAARN…PEDGIQIMSY (85 aa)). N-linked (GlcNAc...) asparagine glycosylation occurs at N471. S550 functions as the Charge relay system in the catalytic mechanism. An N-linked (GlcNAc...) asparagine glycan is attached at N776.

Belongs to the peptidase S8 family.

It is found in the secreted. In Arabidopsis thaliana (Mouse-ear cress), this protein is Subtilisin-like protease SBT5.1.